Here is a 70-residue protein sequence, read N- to C-terminus: Cytoinsectotoxin-2c (70 aa).

It belongs to the cationic peptide 06 (cytoinsectotoxin) family. In terms of tissue distribution, expressed by the venom gland.

It is found in the secreted. Its function is as follows. Insecticidal and antimicrobial peptide. Has insecticidal activity against larvae of flesh fly S.carnaria. Has antibacterial activity against Gram-positive bacterium B.subtilis B-501 (MIC=1.25 uM) and Gram-negative bacterium E.coli DH5alpha (MIC=2.5 uM). The protein is Cytoinsectotoxin-2c of Lachesana tarabaevi (Spider).